The sequence spans 1218 residues: Structural maintenance of chromosomes protein 2 (1218 aa).

32 to 39 provides a ligand contact to ATP; it reads GLNGSGKS. The stretch at 209 to 517 forms a coiled coil; the sequence is VKLKKEKEEY…INSVKIDYKI (309 aa). Residues 525-654 enclose the SMC hinge domain; it reads DVLGQIYKLI…CSNVDLCKKI (130 aa). Coiled coils occupy residues 693–949 and 978–1045; these read LNYE…DTVK and RHDV…KKSE.

Belongs to the SMC family. SMC2 subfamily.

It is found in the nucleus. Functionally, may play a role in the conversion of interphase chromatin into condensed chromosomes. The protein is Structural maintenance of chromosomes protein 2 of Plasmodium falciparum (isolate 3D7).